The sequence spans 115 residues: Transmembrane protein 218 (115 aa).

A run of 3 helical transmembrane segments spans residues 5–25 (VLGV…VLLL), 38–58 (FSVI…LLFP), and 81–101 (YVLL…VLIH).

It belongs to the TMEM218 family. As to quaternary structure, interacts with TMEM67.

It localises to the membrane. The protein resides in the cell projection. It is found in the cilium. Its function is as follows. May be involved in ciliary biogenesis or function. This Homo sapiens (Human) protein is Transmembrane protein 218 (TMEM218).